Reading from the N-terminus, the 647-residue chain is Threonine--tRNA ligase (647 aa).

The TGS domain occupies 1–61 (MIKITFPDGA…EEDGSIEIVT (61 aa)). The segment at 240–538 (DHRKLGKELD…LIETYKGAFP (299 aa)) is catalytic. Residues C334, H385, and H515 each contribute to the Zn(2+) site.

The protein belongs to the class-II aminoacyl-tRNA synthetase family. In terms of assembly, homodimer. It depends on Zn(2+) as a cofactor.

Its subcellular location is the cytoplasm. The enzyme catalyses tRNA(Thr) + L-threonine + ATP = L-threonyl-tRNA(Thr) + AMP + diphosphate + H(+). Catalyzes the attachment of threonine to tRNA(Thr) in a two-step reaction: L-threonine is first activated by ATP to form Thr-AMP and then transferred to the acceptor end of tRNA(Thr). Also edits incorrectly charged L-seryl-tRNA(Thr). The protein is Threonine--tRNA ligase of Streptococcus agalactiae serotype V (strain ATCC BAA-611 / 2603 V/R).